Reading from the N-terminus, the 461-residue chain is Phosphomethylpyrimidine synthase (461 aa).

Residues Asn80, Met109, Tyr139, His174, 194-196 (SRG), 235-238 (DSLR), and Glu274 contribute to the substrate site. His278 lines the Zn(2+) pocket. Position 301 (Tyr301) interacts with substrate. His342 provides a ligand contact to Zn(2+). 3 residues coordinate [4Fe-4S] cluster: Cys422, Cys425, and Cys430.

Belongs to the ThiC family. As to quaternary structure, homodimer. [4Fe-4S] cluster serves as cofactor.

It carries out the reaction 5-amino-1-(5-phospho-beta-D-ribosyl)imidazole + S-adenosyl-L-methionine = 4-amino-2-methyl-5-(phosphooxymethyl)pyrimidine + CO + 5'-deoxyadenosine + formate + L-methionine + 3 H(+). The protein operates within cofactor biosynthesis; thiamine diphosphate biosynthesis. Functionally, catalyzes the synthesis of the hydroxymethylpyrimidine phosphate (HMP-P) moiety of thiamine from aminoimidazole ribotide (AIR) in a radical S-adenosyl-L-methionine (SAM)-dependent reaction. This is Phosphomethylpyrimidine synthase from Nautilia profundicola (strain ATCC BAA-1463 / DSM 18972 / AmH).